The following is a 140-amino-acid chain: Respiratory supercomplex factor 1, mitochondrial (140 aa).

In terms of domain architecture, HIG1 spans 1–79 (MNTLQKIAYR…KESAEQKQTR (79 aa)). 2 consecutive transmembrane segments (helical) span residues 16-32 (LVPL…VLAA) and 46-68 (YFRY…GMYY). A coiled-coil region spans residues 68-126 (YQKESAEQKQTREDKLREKAKLREQLWIEELERRDQLIKARKQRLEESKKELMKVAQEG).

The protein belongs to the RCF1 family. Associates with the respiratory chain complex III/complex IV supercomplex.

Its subcellular location is the mitochondrion membrane. Cytochrome c oxidase subunit which plays a role in assembly of respiratory supercomplexes. The protein is Respiratory supercomplex factor 1, mitochondrial (RCF1) of Clavispora lusitaniae (strain ATCC 42720) (Yeast).